A 370-amino-acid chain; its full sequence is Phosphoribosylformylglycinamidine cyclo-ligase (370 aa).

This sequence belongs to the AIR synthase family.

It is found in the cytoplasm. The enzyme catalyses 2-formamido-N(1)-(5-O-phospho-beta-D-ribosyl)acetamidine + ATP = 5-amino-1-(5-phospho-beta-D-ribosyl)imidazole + ADP + phosphate + H(+). The protein operates within purine metabolism; IMP biosynthesis via de novo pathway; 5-amino-1-(5-phospho-D-ribosyl)imidazole from N(2)-formyl-N(1)-(5-phospho-D-ribosyl)glycinamide: step 2/2. The polypeptide is Phosphoribosylformylglycinamidine cyclo-ligase (Rhodospirillum rubrum (strain ATCC 11170 / ATH 1.1.1 / DSM 467 / LMG 4362 / NCIMB 8255 / S1)).